A 115-amino-acid chain; its full sequence is Class I hydrophobin C (115 aa).

The first 19 residues, 1 to 19 (MFSRVLVAALVALPVLVSA), serve as a signal peptide directing secretion. Intrachain disulfides connect C36-C93, C43-C87, C44-C74, and C94-C108.

The protein belongs to the fungal hydrophobin family. In terms of assembly, self-assembles to form functional amyloid fibrils called rodlets. Self-assembly into fibrillar rodlets occurs spontaneously at hydrophobic:hydrophilic interfaces and the rodlets further associate laterally to form amphipathic monolayers.

The protein resides in the secreted. The protein localises to the cell wall. Functionally, aerial growth, conidiation, and dispersal of filamentous fungi in the environment rely upon a capability of their secreting small amphipathic proteins called hydrophobins (HPBs) with low sequence identity. Class I can self-assemble into an outermost layer of rodlet bundles on aerial cell surfaces, conferring cellular hydrophobicity that supports fungal growth, development and dispersal; whereas Class II form highly ordered films at water-air interfaces through intermolecular interactions but contribute nothing to the rodlet structure. This chain is Class I hydrophobin C, found in Agaricus bisporus (White button mushroom).